The following is a 332-amino-acid chain: UPF0285 protein MK0078 (332 aa).

Belongs to the UPF0285 family.

This Methanopyrus kandleri (strain AV19 / DSM 6324 / JCM 9639 / NBRC 100938) protein is UPF0285 protein MK0078.